A 396-amino-acid chain; its full sequence is Lipid-A-disaccharide synthase (396 aa).

This sequence belongs to the LpxB family.

The enzyme catalyses a lipid X + a UDP-2-N,3-O-bis[(3R)-3-hydroxyacyl]-alpha-D-glucosamine = a lipid A disaccharide + UDP + H(+). It functions in the pathway bacterial outer membrane biogenesis; LPS lipid A biosynthesis. Its function is as follows. Condensation of UDP-2,3-diacylglucosamine and 2,3-diacylglucosamine-1-phosphate to form lipid A disaccharide, a precursor of lipid A, a phosphorylated glycolipid that anchors the lipopolysaccharide to the outer membrane of the cell. This chain is Lipid-A-disaccharide synthase, found in Nitrobacter winogradskyi (strain ATCC 25391 / DSM 10237 / CIP 104748 / NCIMB 11846 / Nb-255).